Reading from the N-terminus, the 308-residue chain is 1,4-dihydroxy-2-naphthoate octaprenyltransferase (308 aa).

A run of 9 helical transmembrane segments spans residues 22–42, 47–67, 101–121, 129–149, 153–173, 186–206, 235–255, 256–276, and 286–306; these read TLPLALASIFTGSALGYWANP, GLVMVLCLLTTILLQVLSNFA, WGLILMVMASFLSGSFLIGIA, FAFAGLGILAIVAAITYTVGV, GYMGLGDISVLVFFGLLGVGG, IILPAIGSGLLASAVLNINNL, ILLSVAALCYLAFAVATAISW, TNYLFVLAMPLLAKHAIFVYC, and ILAQMSMISLLINILFSLGLL.

This sequence belongs to the MenA family. Type 1 subfamily.

It localises to the cell inner membrane. It carries out the reaction an all-trans-polyprenyl diphosphate + 1,4-dihydroxy-2-naphthoate + H(+) = a 2-demethylmenaquinol + CO2 + diphosphate. It participates in quinol/quinone metabolism; menaquinone biosynthesis; menaquinol from 1,4-dihydroxy-2-naphthoate: step 1/2. Functionally, conversion of 1,4-dihydroxy-2-naphthoate (DHNA) to demethylmenaquinone (DMK). The chain is 1,4-dihydroxy-2-naphthoate octaprenyltransferase from Haemophilus influenzae (strain ATCC 51907 / DSM 11121 / KW20 / Rd).